Here is a 189-residue protein sequence, read N- to C-terminus: SAGA-associated factor 11 homolog (189 aa).

The SGF11-type zinc-finger motif lies at C94–C115. Residues R128 to F189 are disordered. The span at S136–T145 shows a compositional bias: low complexity. A Phosphoserine modification is found at S165. Over residues N175–F189 the composition is skewed to low complexity.

This sequence belongs to the SGF11 family. As to quaternary structure, component of some SAGA transcription coactivator-HAT complexes, at least composed of Ada2b, not/nonstop, Pcaf/Gcn5, Sgf11 and Spt3. Within the SAGA complex, Sgf11, e(y)2, and not/nonstop form an additional subcomplex of SAGA called the DUB module (deubiquitination module). Interacts directly with not/nonstop. Interacts with the AMEX complex component xmas-2. Interacts with Cbp80; important for promoter recruitment of Sgf11 that is not associated with the DUB module.

Its subcellular location is the nucleus. The protein localises to the nucleoplasm. The protein resides in the cytoplasm. Its function is as follows. Component of the transcription regulatory histone acetylation (HAT) complex SAGA, a multiprotein complex that activates transcription by remodeling chromatin and mediating histone acetylation and deubiquitination. Within the SAGA complex, participates in a subcomplex that specifically deubiquitinates histone H2B. The SAGA complex is recruited to specific gene promoters by activators, where it is required for transcription. Required for nuclear receptor-mediated transactivation. Binds independently on SAGA to promoters in an RNA-dependent manner. Binds to mRNA and is essential for total mRNA export from the nucleus. Required to counteract heterochromatin silencing. Controls the development of neuronal connectivity in visual system by being required for accurate axon targeting in the optic lobe. Required for expression of ecdysone-induced genes such as br/broad. The polypeptide is SAGA-associated factor 11 homolog (Drosophila virilis (Fruit fly)).